The primary structure comprises 226 residues: Small ribosomal subunit protein uS3 (226 aa).

Residues 39-107 form the KH type-2 domain; that stretch reads IRAYIKKNVV…EVTLNIKEVK (69 aa).

The protein belongs to the universal ribosomal protein uS3 family. In terms of assembly, part of the 30S ribosomal subunit. Forms a tight complex with proteins S10 and S14.

Functionally, binds the lower part of the 30S subunit head. Binds mRNA in the 70S ribosome, positioning it for translation. This chain is Small ribosomal subunit protein uS3, found in Pelagibacter ubique (strain HTCC1062).